The chain runs to 428 residues: Glutamate-1-semialdehyde 2,1-aminomutase (428 aa).

Residue K267 is modified to N6-(pyridoxal phosphate)lysine.

It belongs to the class-III pyridoxal-phosphate-dependent aminotransferase family. HemL subfamily. In terms of assembly, homodimer. Pyridoxal 5'-phosphate serves as cofactor.

The protein localises to the cytoplasm. It carries out the reaction (S)-4-amino-5-oxopentanoate = 5-aminolevulinate. It functions in the pathway porphyrin-containing compound metabolism; protoporphyrin-IX biosynthesis; 5-aminolevulinate from L-glutamyl-tRNA(Glu): step 2/2. The sequence is that of Glutamate-1-semialdehyde 2,1-aminomutase from Desulforapulum autotrophicum (strain ATCC 43914 / DSM 3382 / VKM B-1955 / HRM2) (Desulfobacterium autotrophicum).